Consider the following 278-residue polypeptide: Probable ribosomal RNA small subunit methyltransferase A (278 aa).

Residues N23, L25, G50, E71, D95, and N110 each contribute to the S-adenosyl-L-methionine site.

This sequence belongs to the class I-like SAM-binding methyltransferase superfamily. rRNA adenine N(6)-methyltransferase family. RsmA subfamily.

The protein localises to the cytoplasm. Its function is as follows. Specifically dimethylates two adjacent adenosines in the loop of a conserved hairpin near the 3'-end of 16S rRNA in the 30S particle. May play a critical role in biogenesis of 30S subunits. This chain is Probable ribosomal RNA small subunit methyltransferase A, found in Thermococcus gammatolerans (strain DSM 15229 / JCM 11827 / EJ3).